The chain runs to 165 residues: Shikimate kinase (165 aa).

12 to 17 (GCGKST) contacts ATP. S16 is a binding site for Mg(2+). Residues D34, R57, and G79 each contribute to the substrate site. Position 116 (R116) interacts with ATP. R133 is a substrate binding site.

This sequence belongs to the shikimate kinase family. As to quaternary structure, monomer. Mg(2+) is required as a cofactor.

It is found in the cytoplasm. It carries out the reaction shikimate + ATP = 3-phosphoshikimate + ADP + H(+). Its pathway is metabolic intermediate biosynthesis; chorismate biosynthesis; chorismate from D-erythrose 4-phosphate and phosphoenolpyruvate: step 5/7. Catalyzes the specific phosphorylation of the 3-hydroxyl group of shikimic acid using ATP as a cosubstrate. The polypeptide is Shikimate kinase (Clostridium botulinum (strain Eklund 17B / Type B)).